The primary structure comprises 456 residues: Protein trichome birefringence-like 25 (456 aa).

A helical; Signal-anchor for type II membrane protein membrane pass occupies residues 26–42; that stretch reads QIFLKSVAFFLLIGLAY. A GDS motif motif is present at residues 172 to 174; that stretch reads GDS. A DCXHWCLPGXXDXWN motif motif is present at residues 426–440; the sequence is DCLHWCLPGPIDSWN.

The protein belongs to the PC-esterase family. TBL subfamily.

It is found in the membrane. Its function is as follows. May be involved in the O-acetylation of mannan. May act as a bridging protein that binds pectin and other cell wall polysaccharides. Probably involved in maintaining esterification of pectins. This is Protein trichome birefringence-like 25 (TBL25) from Arabidopsis thaliana (Mouse-ear cress).